Here is a 73-residue protein sequence, read N- to C-terminus: ATP synthase subunit 9, mitochondrial (73 aa).

Helical transmembrane passes span 12-32 (VAALGLIGAGIGVGIVFAALI) and 50-70 (ILGFALSEATGLFALMVSFLL).

Belongs to the ATPase C chain family. As to quaternary structure, F-type ATPases have 2 components, CF(1) - the catalytic core - and CF(0) - the membrane proton channel. CF(1) has five subunits: alpha(3), beta(3), gamma(1), delta(1), epsilon(1). CF(0) has three main subunits: a, b and c.

It localises to the mitochondrion inner membrane. Its function is as follows. Mitochondrial membrane ATP synthase (F(1)F(0) ATP synthase or Complex V) produces ATP from ADP in the presence of a proton gradient across the membrane which is generated by electron transport complexes of the respiratory chain. F-type ATPases consist of two structural domains, F(1) - containing the extramembraneous catalytic core and F(0) - containing the membrane proton channel, linked together by a central stalk and a peripheral stalk. During catalysis, ATP synthesis in the catalytic domain of F(1) is coupled via a rotary mechanism of the central stalk subunits to proton translocation. Part of the complex F(0) domain. A homomeric c-ring of probably 10 subunits is part of the complex rotary element. The chain is ATP synthase subunit 9, mitochondrial (ATP9) from Mycosarcoma maydis (Corn smut fungus).